The following is a 123-amino-acid chain: Small ribosomal subunit protein uS12 (123 aa).

Asp89 carries the 3-methylthioaspartic acid modification.

This sequence belongs to the universal ribosomal protein uS12 family. In terms of assembly, part of the 30S ribosomal subunit. Contacts proteins S8 and S17. May interact with IF1 in the 30S initiation complex.

In terms of biological role, with S4 and S5 plays an important role in translational accuracy. Interacts with and stabilizes bases of the 16S rRNA that are involved in tRNA selection in the A site and with the mRNA backbone. Located at the interface of the 30S and 50S subunits, it traverses the body of the 30S subunit contacting proteins on the other side and probably holding the rRNA structure together. The combined cluster of proteins S8, S12 and S17 appears to hold together the shoulder and platform of the 30S subunit. The protein is Small ribosomal subunit protein uS12 of Anaeromyxobacter dehalogenans (strain 2CP-1 / ATCC BAA-258).